The chain runs to 165 residues: Phosphopantetheine adenylyltransferase (165 aa).

Ser-10 provides a ligand contact to substrate. Residues 10 to 11 and His-18 contribute to the ATP site; that span reads SF. Substrate is bound by residues Lys-42, Thr-79, and Arg-93. Residues 94-96, Glu-104, and 129-135 each bind ATP; these read GLR and VRPITAT.

This sequence belongs to the bacterial CoaD family. Homohexamer. It depends on Mg(2+) as a cofactor.

It localises to the cytoplasm. The catalysed reaction is (R)-4'-phosphopantetheine + ATP + H(+) = 3'-dephospho-CoA + diphosphate. It participates in cofactor biosynthesis; coenzyme A biosynthesis; CoA from (R)-pantothenate: step 4/5. Reversibly transfers an adenylyl group from ATP to 4'-phosphopantetheine, yielding dephospho-CoA (dPCoA) and pyrophosphate. This is Phosphopantetheine adenylyltransferase from Nitrobacter hamburgensis (strain DSM 10229 / NCIMB 13809 / X14).